Here is a 334-residue protein sequence, read N- to C-terminus: Ornithine carbamoyltransferase (334 aa).

Residues 57-60 (STRT), Gln-84, Arg-108, and 135-138 (HPTQ) each bind carbamoyl phosphate. Residues Asn-169, Asp-233, and 237–238 (SM) each bind L-ornithine. Residues 275–276 (CL) and Arg-320 each bind carbamoyl phosphate.

It belongs to the aspartate/ornithine carbamoyltransferase superfamily. OTCase family.

The protein localises to the cytoplasm. It carries out the reaction carbamoyl phosphate + L-ornithine = L-citrulline + phosphate + H(+). It participates in amino-acid biosynthesis; L-arginine biosynthesis; L-arginine from L-ornithine and carbamoyl phosphate: step 1/3. Functionally, reversibly catalyzes the transfer of the carbamoyl group from carbamoyl phosphate (CP) to the N(epsilon) atom of ornithine (ORN) to produce L-citrulline. The chain is Ornithine carbamoyltransferase from Vibrio cholerae serotype O1 (strain ATCC 39315 / El Tor Inaba N16961).